The chain runs to 97 residues: MNIRPLHDRVIVKRKEVESKSAGGIVLTGSAAGKSTRGEIIAVGKGRVLENGNTQPLDVKIGDTVIFNDGYGVKVEKIDNQDMLIMSESDILAIVEA.

Belongs to the GroES chaperonin family. As to quaternary structure, heptamer of 7 subunits arranged in a ring. Interacts with the chaperonin GroEL.

It is found in the cytoplasm. Together with the chaperonin GroEL, plays an essential role in assisting protein folding. The GroEL-GroES system forms a nano-cage that allows encapsulation of the non-native substrate proteins and provides a physical environment optimized to promote and accelerate protein folding. GroES binds to the apical surface of the GroEL ring, thereby capping the opening of the GroEL channel. The protein is Co-chaperonin GroES of Buchnera aphidicola subsp. Tuberolachnus salignus.